Reading from the N-terminus, the 173-residue chain is Terpene cyclase subB (173 aa).

Transmembrane regions (helical) follow at residues 11–31 (PGYL…GLGW), 51–71 (ALMP…IYPF), 112–132 (LPFI…ALAL), and 141–161 (AFSA…QLLS).

This sequence belongs to the paxB family.

Its subcellular location is the membrane. It participates in secondary metabolite biosynthesis; terpenoid biosynthesis. Functionally, terpene cyclase; part of the gene cluster that mediates the biosynthesis of the immunosuppressants subglutinols, meroterpenoids consisting of an alpha-pyrone (4-hydroxy-5,6-dimethyl-2-pyrone) moiety attached to a decalin core fused to a five-membered cyclic ether carrying a prenylside chain. The first step of the pathway is the synthesis of the alpha-pyrone moiety by the polyketide synthase subA via condensation of one acetyl-CoA starter unit with 3 malonyl-CoA units and 2 methylations. The alpha-pyrone is then combined with geranylgeranyl pyrophosphate (GGPP) formed by the GGPP synthase subD through the action of the prenyltransferase subC to yield a linear alpha-pyrone diterpenoid. Subsequent steps in the subglutinol biosynthetic pathway involve the decalin core formation, which is thought to be initiated by the epoxidation of the C10-C11 olefin by the FAD-dependent oxidoreductase subE. The following cyclization cascade would be catalyzed by the terpene cyclase subB. Lastly, the FAD-dependent dehydrogenase subF probably catalyzes the five-membered cyclic ether formation to complete the formation of subglutinol A. Subsequent redox reactions appear to give rise to subglutinol C and D, however, it remains unclear which enzymes are responsible for these transformations. SubD may have secondary function in the conversion of the identified subglutinols to subglutinol analog 45, which seems to be the major product of the cluster. The polypeptide is Terpene cyclase subB (Metarhizium robertsii (strain ARSEF 23 / ATCC MYA-3075) (Metarhizium anisopliae (strain ARSEF 23))).